Here is a 259-residue protein sequence, read N- to C-terminus: MRDRRGSLGTCLAQVQQARGGDSNKLSYSLKKRMPMEGLWPADAPSWMNKPVVDGNSQSEALSLEMRKDPSGAGPWLHGGGPVLPYVKESVRRNPASAATRSTAVGLLPAPTECFAQVACSGVEALERDWLGGGARATDGHRGQCPKGEPRVSRLLCHQKLPEMGSFQDDPPNALPKGLGSELEPSCLHSVLSATLHACPEVLLNDETKRVFLDRLKPMFSKQTMEFKKMLKNTSDGLQITLGLLALQPFELANSLCHS.

As to quaternary structure, interacts with transcriptional activator STAT3; the interaction occurs in both the nucleus and the cytoplasm, is enhanced by IL6 and promotes STAT3 dephosphorylation, leading to negative regulation of STAT3 transcriptional activator activity. Can interact with both unphosphorylated and phosphorylated STAT3 but interacts preferentially with phosphorylated STAT3 in the nucleus. Interacts with protein phosphatase PTPN2/TC45; this promotes interaction of PTPN2 with STAT3, leading to dephosphorylation of STAT3 by PTPN2.

It localises to the nucleus. The protein localises to the cytoplasm. It is found in the cytoplasmic vesicle. Its subcellular location is the secretory vesicle. The protein resides in the acrosome. Its function is as follows. Promotes dephosphorylation of transcriptional activator STAT3 by interacting with both STAT3 and protein phosphatase PTPN2. This promotes interaction of PTPN2 with STAT3 and mediates STAT3 dephosphorylation by PTPN2, leading to negative regulation of STAT3 transcriptional activator activity. May be required for spermiogenesis or sperm function. The protein is Protein FAM220A (FAM220A) of Macaca fascicularis (Crab-eating macaque).